The chain runs to 427 residues: Phosphatidylinositol 4-phosphate 5-kinase 10 (427 aa).

A PIPK domain is found at methionine 1–phenylalanine 419. 2 disordered regions span residues serine 247–asparagine 287 and methionine 334–glutamine 355. Residues tyrosine 379–serine 400 are activation loop.

The enzyme catalyses a 1,2-diacyl-sn-glycero-3-phospho-(1D-myo-inositol 4-phosphate) + ATP = a 1,2-diacyl-sn-glycero-3-phospho-(1D-myo-inositol-4,5-bisphosphate) + ADP + H(+). The sequence is that of Phosphatidylinositol 4-phosphate 5-kinase 10 (PIP5K10) from Arabidopsis thaliana (Mouse-ear cress).